The following is a 476-amino-acid chain: Aspartyl/glutamyl-tRNA(Asn/Gln) amidotransferase subunit B (476 aa).

Belongs to the GatB/GatE family. GatB subfamily. As to quaternary structure, heterotrimer of A, B and C subunits.

It catalyses the reaction L-glutamyl-tRNA(Gln) + L-glutamine + ATP + H2O = L-glutaminyl-tRNA(Gln) + L-glutamate + ADP + phosphate + H(+). The catalysed reaction is L-aspartyl-tRNA(Asn) + L-glutamine + ATP + H2O = L-asparaginyl-tRNA(Asn) + L-glutamate + ADP + phosphate + 2 H(+). Functionally, allows the formation of correctly charged Asn-tRNA(Asn) or Gln-tRNA(Gln) through the transamidation of misacylated Asp-tRNA(Asn) or Glu-tRNA(Gln) in organisms which lack either or both of asparaginyl-tRNA or glutaminyl-tRNA synthetases. The reaction takes place in the presence of glutamine and ATP through an activated phospho-Asp-tRNA(Asn) or phospho-Glu-tRNA(Gln). This is Aspartyl/glutamyl-tRNA(Asn/Gln) amidotransferase subunit B from Geobacillus thermodenitrificans (strain NG80-2).